Here is a 576-residue protein sequence, read N- to C-terminus: Non-neuronal cytoplasmic intermediate filament protein (576 aa).

A disordered region spans residues 1–51; that stretch reads MTSKISTTYEEEGRQSKIQPRAFVITRSGPSSKSSSFSARQSYASSRQSIT. A head region spans residues 2–75; it reads TSKISTTYEE…FRGTREKEKR (74 aa). Residues 28 to 49 show a composition bias toward low complexity; the sequence is SGPSSKSSSFSARQSYASSRQS. Residues 73 to 425 enclose the IF rod domain; sequence EKREMQNLNE…KLLEGEESRV (353 aa). The segment at 76–108 is coil 1A; sequence EMQNLNERLASYIEKVHFLDAQVKKLEAENEAL. A linker 1 region spans residues 109–122; the sequence is RNRKSESLQPIRDA. Residues 123–260 are coil 1B; that stretch reads YENELAQARK…DLLDQLELLK (138 aa). The linker 2 stretch occupies residues 261–278; it reads PEPIQIKGMDYAEFWKSE. The tract at residues 279–425 is coil 2; that stretch reads LSKCVREIQS…KLLEGEESRV (147 aa). The tract at residues 426-576 is tail; the sequence is GLRSLVEQAI…KATLIAKFSG (151 aa). In terms of domain architecture, LTD spans 456–574; that stretch reads GSMTIQRSSK…NEKATLIAKF (119 aa).

The protein belongs to the intermediate filament family. As to quaternary structure, can form homopolymers.

It is found in the cytoplasm. The protein is Non-neuronal cytoplasmic intermediate filament protein of Cornu aspersum (Brown garden snail).